Consider the following 359-residue polypeptide: Glycerol-1-phosphate dehydrogenase [NAD(P)+] (359 aa).

Residues 107–111 (GRVID) and 129–132 (TAAS) contribute to the NAD(+) site. Position 134 (Asp-134) interacts with substrate. NAD(+) is bound at residue Ser-138. Substrate is bound at residue Asp-181. Zn(2+)-binding residues include Asp-181 and His-261. His-265 is a substrate binding site. His-277 is a Zn(2+) binding site.

It belongs to the glycerol-1-phosphate dehydrogenase family. Requires Zn(2+) as cofactor.

The protein resides in the cytoplasm. It carries out the reaction sn-glycerol 1-phosphate + NAD(+) = dihydroxyacetone phosphate + NADH + H(+). The catalysed reaction is sn-glycerol 1-phosphate + NADP(+) = dihydroxyacetone phosphate + NADPH + H(+). It functions in the pathway membrane lipid metabolism; glycerophospholipid metabolism. Functionally, catalyzes the NAD(P)H-dependent reduction of dihydroxyacetonephosphate (DHAP or glycerone phosphate) to glycerol 1-phosphate (G1P). The G1P thus generated is used as the glycerophosphate backbone of phospholipids in the cellular membranes of Archaea. This Methanosphaerula palustris (strain ATCC BAA-1556 / DSM 19958 / E1-9c) protein is Glycerol-1-phosphate dehydrogenase [NAD(P)+].